Reading from the N-terminus, the 95-residue chain is Co-chaperonin GroES (95 aa).

Belongs to the GroES chaperonin family. In terms of assembly, heptamer of 7 subunits arranged in a ring. Interacts with the chaperonin GroEL.

It localises to the cytoplasm. In terms of biological role, together with the chaperonin GroEL, plays an essential role in assisting protein folding. The GroEL-GroES system forms a nano-cage that allows encapsulation of the non-native substrate proteins and provides a physical environment optimized to promote and accelerate protein folding. GroES binds to the apical surface of the GroEL ring, thereby capping the opening of the GroEL channel. This is Co-chaperonin GroES from Geobacter metallireducens (strain ATCC 53774 / DSM 7210 / GS-15).